Reading from the N-terminus, the 563-residue chain is Grainyhead-like protein 1 homolog (563 aa).

In terms of domain architecture, Grh/CP2 DB spans 194–428; that stretch reads NNLGFQYVLE…ELDKPAALFI (235 aa). Interaction with DNA regions lie at residues 326 to 335 and 372 to 375; these read TDFSTQKGVK and RKLR. The disordered stretch occupies residues 377–405; it reads EDKRAQKRKVQEYTAGALPGGRKKSDGEY.

The protein belongs to the grh/CP2 family. Grainyhead subfamily.

Its subcellular location is the nucleus. Functionally, probable transcription factor. Binds a motif with the core sequence 5'-C[ACT][TG]G-3' in regulatory elements of target genes. Many putative target genes show oscillating expression levels, perhaps as a result of rhythmic variation in accumulation of grh-1. Plays a role in proper cuticle formation and/or barrier function and is required repetitively during development, for successful completion of each molt. Involved in modulating lifespan. Plays a role in defense response to bacteria. May act upstream of the p38 MAP kinase / pmk-1 pathway. May act downstream of the insulin/IGF-1 receptor signaling (IIS) pathway. The chain is Grainyhead-like protein 1 homolog from Caenorhabditis elegans.